We begin with the raw amino-acid sequence, 815 residues long: Heme-copper oxidase subunit I+III (815 aa).

The interval 1–467 is COX1; it reads MVSRLRGFLA…QLSTLGAFIF (467 aa). The chain crosses the membrane as a helical span at residues 26 to 46; sequence LLYLVTSIAFLLIAGSLALLF. Residue H70 coordinates Fe(II)-heme a. 18 helical membrane passes run 71-91, 105-125, 157-177, 197-217, 242-262, 281-301, 314-334, 339-359, 380-400, 419-439, 463-483, 580-600, 637-657, 683-703, 708-728, 736-756, 758-778, and 791-811; these read GLIMLLWFASPFAFGLANYIV, LNALSYWLYLLSGLVLLASFF, LAIFLFSLSVTLGTINFLVTI, ILFTVILMLWAFPPLMVGGAL, LFWFFGHPEVYILLFPALGAM, LTAFLIATIISFVVWMHHMFI, ITTILISIPFEMAVMSFIFTL, LVYTVPMLFAVGALLNFIIGG, VVAHFHYILVGTVTLGLIAGL, IHFALAMLGVALTFLPQFALM, GAFIFGGSMAIGLVNFLYSLV, ALFGLFVSKPLSYLGAIVFLL, WVFIASEVATFGSIFSAYFFI, LINTIILFTGTMLFTLAYLGV, YLITLSGLLGTLFMAIYFLTV, LLIAGLGLDAGMYMQAYYVTT, AHALHVILGVLATTYLLVKLF, and VLAVGIYWGIVEIVWTLVFPL. Cu cation is bound by residues H248, Y252, H297, and H298. Positions 248–252 form a cross-link, 1'-histidyl-3'-tyrosine (His-Tyr); sequence HPEVY. Position 383 (H383) interacts with heme a3. H385 lines the Fe(II)-heme a pocket. The interval 545–815 is COX3; sequence DVSNVPLSGG…TLVFPLYYLV (271 aa).

The protein in the N-terminal section; belongs to the heme-copper respiratory oxidase family. It in the C-terminal section; belongs to the cytochrome c oxidase subunit 3 family. Heme is required as a cofactor. Requires Cu cation as cofactor.

It is found in the cell membrane. This is Heme-copper oxidase subunit I+III (aoxB) from Aeropyrum pernix (strain ATCC 700893 / DSM 11879 / JCM 9820 / NBRC 100138 / K1).